We begin with the raw amino-acid sequence, 574 residues long: Septation ring formation regulator EzrA (574 aa).

Topologically, residues 1–7 (MSSGIIL) are extracellular. Residues 8–26 (LIVAIVLLVIIAYLVGVII) traverse the membrane as a helical segment. At 27 to 574 (RKRNDSLITS…YEKTREHIRF (548 aa)) the chain is on the cytoplasmic side. Coiled coils occupy residues 102–141 (NFIR…EEKN), 274–350 (ELVT…ETES), and 459–520 (QLEA…SFEA).

The protein belongs to the EzrA family.

The protein localises to the cell membrane. Its function is as follows. Negative regulator of FtsZ ring formation; modulates the frequency and position of FtsZ ring formation. Inhibits FtsZ ring formation at polar sites. Interacts either with FtsZ or with one of its binding partners to promote depolymerization. This is Septation ring formation regulator EzrA from Streptococcus pyogenes serotype M4 (strain MGAS10750).